The following is a 215-amino-acid chain: Cytochrome b6 (215 aa).

A helical membrane pass occupies residues 32–52; the sequence is IFYCIGGIVFTSFLIQVASGF. Cys35 provides a ligand contact to heme c. The heme b site is built by His86 and His100. Transmembrane regions (helical) follow at residues 90–110, 116–136, and 186–206; these read ASMMVLMLILHMFRVYLTGGF, LTWVTGVILAVLTVSFGVTGY, and LHTFVLPLLTAVFMLMHFLMI. Heme b is bound by residues His187 and His202.

It belongs to the cytochrome b family. PetB subfamily. As to quaternary structure, the 4 large subunits of the cytochrome b6-f complex are cytochrome b6, subunit IV (17 kDa polypeptide, PetD), cytochrome f and the Rieske protein, while the 4 small subunits are PetG, PetL, PetM and PetN. The complex functions as a dimer. Heme b serves as cofactor. It depends on heme c as a cofactor.

The protein resides in the plastid. The protein localises to the chloroplast thylakoid membrane. Component of the cytochrome b6-f complex, which mediates electron transfer between photosystem II (PSII) and photosystem I (PSI), cyclic electron flow around PSI, and state transitions. The polypeptide is Cytochrome b6 (Gracilaria tenuistipitata var. liui (Red alga)).